A 305-amino-acid polypeptide reads, in one-letter code: Aspartate carbamoyltransferase catalytic subunit (305 aa).

Arg58 and Thr59 together coordinate carbamoyl phosphate. Position 86 (Lys86) interacts with L-aspartate. Positions 108, 136, and 139 each coordinate carbamoyl phosphate. L-aspartate contacts are provided by Arg169 and Arg223. The carbamoyl phosphate site is built by Gly264 and Pro265.

This sequence belongs to the aspartate/ornithine carbamoyltransferase superfamily. ATCase family. In terms of assembly, heterododecamer (2C3:3R2) of six catalytic PyrB chains organized as two trimers (C3), and six regulatory PyrI chains organized as three dimers (R2).

It carries out the reaction carbamoyl phosphate + L-aspartate = N-carbamoyl-L-aspartate + phosphate + H(+). It participates in pyrimidine metabolism; UMP biosynthesis via de novo pathway; (S)-dihydroorotate from bicarbonate: step 2/3. In terms of biological role, catalyzes the condensation of carbamoyl phosphate and aspartate to form carbamoyl aspartate and inorganic phosphate, the committed step in the de novo pyrimidine nucleotide biosynthesis pathway. This chain is Aspartate carbamoyltransferase catalytic subunit, found in Syntrophobacter fumaroxidans (strain DSM 10017 / MPOB).